A 328-amino-acid chain; its full sequence is Beta-ketoacyl-[acyl-carrier-protein] synthase III (328 aa).

Active-site residues include cysteine 122 and histidine 255. Residues glutamine 256–arginine 260 are ACP-binding. The active site involves asparagine 285.

Belongs to the thiolase-like superfamily. FabH family. As to quaternary structure, homodimer.

It localises to the cytoplasm. It catalyses the reaction malonyl-[ACP] + acetyl-CoA + H(+) = 3-oxobutanoyl-[ACP] + CO2 + CoA. The protein operates within lipid metabolism; fatty acid biosynthesis. Catalyzes the condensation reaction of fatty acid synthesis by the addition to an acyl acceptor of two carbons from malonyl-ACP. Catalyzes the first condensation reaction which initiates fatty acid synthesis and may therefore play a role in governing the total rate of fatty acid production. Possesses both acetoacetyl-ACP synthase and acetyl transacylase activities. Its substrate specificity determines the biosynthesis of branched-chain and/or straight-chain of fatty acids. This chain is Beta-ketoacyl-[acyl-carrier-protein] synthase III, found in Herminiimonas arsenicoxydans.